The chain runs to 252 residues: Chlorophyll a-b binding protein P4, chloroplastic (252 aa).

W56 provides a ligand contact to chlorophyll b. 2 residues coordinate chlorophyll a: F76 and E95. A chlorophyll b-binding site is contributed by R100. The next 2 helical transmembrane spans lie at 101-121 (WAML…IGII) and 134-154 (YFAS…YVEI). Residues S137, V143, E153, and R156 each coordinate chlorophyll b. 6 residues coordinate chlorophyll a: K203, E204, N207, R209, Q221, and H236.

It belongs to the light-harvesting chlorophyll a/b-binding (LHC) protein family. As to quaternary structure, the LHC complex consists of chlorophyll a-b binding proteins. Binds at least 14 chlorophylls (8 Chl-a and 6 Chl-b) and carotenoids such as lutein and neoxanthin. serves as cofactor. In terms of processing, photoregulated by reversible phosphorylation of its threonine residues.

The protein localises to the plastid. Its subcellular location is the chloroplast thylakoid membrane. In terms of biological role, the light-harvesting complex (LHC) functions as a light receptor, it captures and delivers excitation energy to photosystems with which it is closely associated. May channel protons produced in the catalytic Mn center of water oxidation into the thylakoid lumen. This Pisum sativum (Garden pea) protein is Chlorophyll a-b binding protein P4, chloroplastic.